The sequence spans 372 residues: NAD(P)H-quinone oxidoreductase subunit 1 (372 aa).

8 consecutive transmembrane segments (helical) span residues 27–47 (IIWLPLPMLLVLVAAVVGVLV), 97–117 (ILFTAGPILVLVPVILSWLIV), 128–148 (VGIGIFLWIALSSIQPIGLLM), 176–196 (LALSVLAIVLMTNSLSTIDIV), 204–224 (ILSWNIWRQPVGFIVFWICAL), 266–286 (ILSALLVSILYLGGWGFPIPV), 308–328 (SIGIVMTVLKAYLLVFIAILL), and 347–367 (FLLPISLANLLITAGLKLAFP).

Belongs to the complex I subunit 1 family. In terms of assembly, NDH-1 is composed of at least 11 different subunits.

The protein localises to the cellular thylakoid membrane. It carries out the reaction a plastoquinone + NADH + (n+1) H(+)(in) = a plastoquinol + NAD(+) + n H(+)(out). The catalysed reaction is a plastoquinone + NADPH + (n+1) H(+)(in) = a plastoquinol + NADP(+) + n H(+)(out). Its function is as follows. NDH-1 shuttles electrons from an unknown electron donor, via FMN and iron-sulfur (Fe-S) centers, to quinones in the respiratory and/or the photosynthetic chain. The immediate electron acceptor for the enzyme in this species is believed to be plastoquinone. Couples the redox reaction to proton translocation, and thus conserves the redox energy in a proton gradient. This chain is NAD(P)H-quinone oxidoreductase subunit 1, found in Prochlorococcus marinus (strain MIT 9215).